Here is a 201-residue protein sequence, read N- to C-terminus: Small ribosomal subunit protein uS4c (201 aa).

Residues 17 to 44 (ALPGLTNKKPRTGSDLRNQSRSGKKSQY) are disordered. An S4 RNA-binding domain is found at 89–149 (MRLDNILFRL…DEQKSRALIQ (61 aa)).

It belongs to the universal ribosomal protein uS4 family. As to quaternary structure, part of the 30S ribosomal subunit. Contacts protein S5. The interaction surface between S4 and S5 is involved in control of translational fidelity.

Its subcellular location is the plastid. The protein resides in the chloroplast. One of the primary rRNA binding proteins, it binds directly to 16S rRNA where it nucleates assembly of the body of the 30S subunit. Its function is as follows. With S5 and S12 plays an important role in translational accuracy. The chain is Small ribosomal subunit protein uS4c (rps4) from Atropa belladonna (Belladonna).